The following is a 210-amino-acid chain: Guanylate kinase (210 aa).

In terms of domain architecture, Guanylate kinase-like spans 8-188; it reads GNLFIIAAPS…SLASLEHIVL (181 aa). 15-22 contributes to the ATP binding site; the sequence is APSGAGKS.

Belongs to the guanylate kinase family.

It is found in the cytoplasm. It catalyses the reaction GMP + ATP = GDP + ADP. Its function is as follows. Essential for recycling GMP and indirectly, cGMP. This chain is Guanylate kinase, found in Idiomarina loihiensis (strain ATCC BAA-735 / DSM 15497 / L2-TR).